Consider the following 196-residue polypeptide: Ribose 1,5-bisphosphate phosphokinase PhnN (196 aa).

It belongs to the ribose 1,5-bisphosphokinase family.

The enzyme catalyses alpha-D-ribose 1,5-bisphosphate + ATP = 5-phospho-alpha-D-ribose 1-diphosphate + ADP. It functions in the pathway metabolic intermediate biosynthesis; 5-phospho-alpha-D-ribose 1-diphosphate biosynthesis; 5-phospho-alpha-D-ribose 1-diphosphate from D-ribose 5-phosphate (route II): step 3/3. Its function is as follows. Catalyzes the phosphorylation of ribose 1,5-bisphosphate to 5-phospho-D-ribosyl alpha-1-diphosphate (PRPP). The protein is Ribose 1,5-bisphosphate phosphokinase PhnN of Psychromonas ingrahamii (strain DSM 17664 / CCUG 51855 / 37).